A 558-amino-acid polypeptide reads, in one-letter code: Ribonuclease Y (558 aa).

The chain crosses the membrane as a helical span at residues 3 to 23 (VLSILLILVAVGVGIFVGRQF). The region spanning 248–311 (TTTTVELPSN…EIAKEALQRL (64 aa)) is the KH domain. The region spanning 374-467 (VLLHSKEVAY…VCAADALSAA (94 aa)) is the HD domain.

Belongs to the RNase Y family.

It localises to the cell membrane. In terms of biological role, endoribonuclease that initiates mRNA decay. This is Ribonuclease Y from Aquifex aeolicus (strain VF5).